The primary structure comprises 87 residues: Mitochondrial import inner membrane translocase subunit TIM9 (87 aa).

Methionine 1 is modified (N-acetylmethionine). The short motif at 35–59 is the Twin CX3C motif element; sequence CFTDCVNDFTTSKLTNKEQTCIMKC. Intrachain disulfides connect cysteine 35–cysteine 59 and cysteine 39–cysteine 55.

Belongs to the small Tim family. In terms of assembly, heterohexamer; composed of 3 copies of TIM9 and 3 copies of TIM10, named soluble 70 kDa complex. Associates with the TIM12 component of the TIM22 complex, whose core is composed of TIM18, TIM22 and TIM54. Interacts with the transmembrane regions of multi-pass transmembrane proteins in transit.

It is found in the mitochondrion inner membrane. The protein resides in the mitochondrion intermembrane space. In terms of biological role, mitochondrial intermembrane chaperone that participates in the import and insertion of multi-pass transmembrane proteins into the mitochondrial inner membrane. Also required for the transfer of beta-barrel precursors from the TOM complex to the sorting and assembly machinery (SAM complex) of the outer membrane. Acts as a chaperone-like protein that protects the hydrophobic precursors from aggregation and guide them through the mitochondrial intermembrane space. Compared to TIM10, it may have a strong structural role. The sequence is that of Mitochondrial import inner membrane translocase subunit TIM9 (TIM9) from Saccharomyces cerevisiae (strain ATCC 204508 / S288c) (Baker's yeast).